The primary structure comprises 251 residues: Cytochrome c oxidase subunit 2 (251 aa).

Residues 1 to 15 form the signal peptide; the sequence is MLNLLYNQIFNVILN. At 16–41 the chain is on the mitochondrial intermembrane side; it reads DVPTPYNTYFQDSATPNQEGILELHD. A helical transmembrane segment spans residues 42 to 62; it reads NIMFYLLVILGLVSWLLFTIT. Residues 63-82 lie on the Mitochondrial matrix side of the membrane; sequence RTYSKNPIAYKYIKHGQTIE. A helical membrane pass occupies residues 83-103; sequence IIWTIFPAVILLIIAFPSFIL. Over 104–251 the chain is Mitochondrial intermembrane; sequence LYLCDEVISP…PAFLEWLNEQ (148 aa). Residues His-186, Cys-221, Glu-223, Cys-225, His-229, and Met-232 each contribute to the Cu cation site. Glu-223 contributes to the Mg(2+) binding site.

This sequence belongs to the cytochrome c oxidase subunit 2 family. As to quaternary structure, component of the cytochrome c oxidase (complex IV, CIV), a multisubunit enzyme composed of a catalytic core of 3 subunits and several supernumerary subunits. The complex exists as a monomer or a dimer and forms supercomplexes (SCs) in the inner mitochondrial membrane with ubiquinol-cytochrome c oxidoreductase (cytochrome b-c1 complex, complex III, CIII). Cu cation serves as cofactor. In terms of processing, the signal sequence of COX2 is processed by IMP1.

It localises to the mitochondrion inner membrane. The enzyme catalyses 4 Fe(II)-[cytochrome c] + O2 + 8 H(+)(in) = 4 Fe(III)-[cytochrome c] + 2 H2O + 4 H(+)(out). Its function is as follows. Component of the cytochrome c oxidase, the last enzyme in the mitochondrial electron transport chain which drives oxidative phosphorylation. The respiratory chain contains 3 multisubunit complexes succinate dehydrogenase (complex II, CII), ubiquinol-cytochrome c oxidoreductase (cytochrome b-c1 complex, complex III, CIII) and cytochrome c oxidase (complex IV, CIV), that cooperate to transfer electrons derived from NADH and succinate to molecular oxygen, creating an electrochemical gradient over the inner membrane that drives transmembrane transport and the ATP synthase. Cytochrome c oxidase is the component of the respiratory chain that catalyzes the reduction of oxygen to water. Electrons originating from reduced cytochrome c in the intermembrane space (IMS) are transferred via the dinuclear copper A center (CU(A)) of subunit 2 and heme A of subunit 1 to the active site in subunit 1, a binuclear center (BNC) formed by heme A3 and copper B (CU(B)). The BNC reduces molecular oxygen to 2 water molecules using 4 electrons from cytochrome c in the IMS and 4 protons from the mitochondrial matrix. In Lachancea thermotolerans (strain ATCC 56472 / CBS 6340 / NRRL Y-8284) (Yeast), this protein is Cytochrome c oxidase subunit 2 (COX2).